Reading from the N-terminus, the 242-residue chain is MRLIVTKNYEEMSKVAAKEMAEDIKRNPEIVLGLATGGTPVGMYKELIRMYNEGELDFSKVTSINLDEYVGLSGDHDQSYRYFMNTNLFNHINIDKNNTFVPNGLAENVEEECMAYDSRIQDMGGIDLQLLGLGANGHIGFNEPGEALSVGTHLTDLKESTIEANARFFDSIDDVPRKAITMGLGGIMKAKKIMVIASGEGKAEVVKAMMSGKITTEIPATMLQMHRDVILIVDEDAAKLLK.

The Proton acceptor; for enolization step role is filled by aspartate 67. Asparagine 136 functions as the For ring-opening step in the catalytic mechanism. Histidine 138 serves as the catalytic Proton acceptor; for ring-opening step. The active-site For ring-opening step is the glutamate 143.

It belongs to the glucosamine/galactosamine-6-phosphate isomerase family. NagB subfamily.

The enzyme catalyses alpha-D-glucosamine 6-phosphate + H2O = beta-D-fructose 6-phosphate + NH4(+). The protein operates within amino-sugar metabolism; N-acetylneuraminate degradation; D-fructose 6-phosphate from N-acetylneuraminate: step 5/5. Catalyzes the reversible isomerization-deamination of glucosamine 6-phosphate (GlcN6P) to form fructose 6-phosphate (Fru6P) and ammonium ion. In Clostridium perfringens (strain 13 / Type A), this protein is Glucosamine-6-phosphate deaminase.